A 265-amino-acid polypeptide reads, in one-letter code: Undecaprenyl-diphosphatase 1 (265 aa).

A run of 7 helical transmembrane segments spans residues 4 to 24 (IIIA…PISS), 42 to 62 (AKTF…ILYH), 84 to 104 (FHVF…HDVI), 108 to 128 (LFQP…MIFA), 184 to 204 (SEFS…LDLL), 217 to 237 (MFAV…VTFL), and 245 to 265 (LKPF…FVLL).

It belongs to the UppP family.

The protein resides in the cell membrane. It carries out the reaction di-trans,octa-cis-undecaprenyl diphosphate + H2O = di-trans,octa-cis-undecaprenyl phosphate + phosphate + H(+). Catalyzes the dephosphorylation of undecaprenyl diphosphate (UPP). Confers resistance to bacitracin. The chain is Undecaprenyl-diphosphatase 1 from Bacillus thuringiensis (strain Al Hakam).